The primary structure comprises 62 residues: Beta-defensin 133 (62 aa).

An N-terminal signal peptide occupies residues 1–21 (MKIHIFLFVLFFFLVPIATRG). 2 disulfides stabilise this stretch: Cys-32–Cys-60 and Cys-39–Cys-53.

This sequence belongs to the beta-defensin family.

Its subcellular location is the secreted. In terms of biological role, has antibacterial activity. This is Beta-defensin 133 (DEFB133) from Pan troglodytes (Chimpanzee).